A 611-amino-acid polypeptide reads, in one-letter code: Dihydroxy-acid dehydratase (611 aa).

Aspartate 81 contributes to the Mg(2+) binding site. Position 122 (cysteine 122) interacts with [2Fe-2S] cluster. Positions 123 and 124 each coordinate Mg(2+). Position 124 is an N6-carboxylysine (lysine 124). Cysteine 195 serves as a coordination point for [2Fe-2S] cluster. Glutamate 491 contacts Mg(2+). Serine 517 acts as the Proton acceptor in catalysis.

This sequence belongs to the IlvD/Edd family. As to quaternary structure, homodimer. [2Fe-2S] cluster is required as a cofactor. The cofactor is Mg(2+).

It carries out the reaction (2R)-2,3-dihydroxy-3-methylbutanoate = 3-methyl-2-oxobutanoate + H2O. The catalysed reaction is (2R,3R)-2,3-dihydroxy-3-methylpentanoate = (S)-3-methyl-2-oxopentanoate + H2O. It functions in the pathway amino-acid biosynthesis; L-isoleucine biosynthesis; L-isoleucine from 2-oxobutanoate: step 3/4. It participates in amino-acid biosynthesis; L-valine biosynthesis; L-valine from pyruvate: step 3/4. Its function is as follows. Functions in the biosynthesis of branched-chain amino acids. Catalyzes the dehydration of (2R,3R)-2,3-dihydroxy-3-methylpentanoate (2,3-dihydroxy-3-methylvalerate) into 2-oxo-3-methylpentanoate (2-oxo-3-methylvalerate) and of (2R)-2,3-dihydroxy-3-methylbutanoate (2,3-dihydroxyisovalerate) into 2-oxo-3-methylbutanoate (2-oxoisovalerate), the penultimate precursor to L-isoleucine and L-valine, respectively. The polypeptide is Dihydroxy-acid dehydratase (Brucella abortus (strain S19)).